The sequence spans 440 residues: Deoxyguanosinetriphosphate triphosphohydrolase-like protein (440 aa).

The HD domain occupies 61-256; the sequence is RLIHSLEVSC…MEAADDLCYS (196 aa).

The protein belongs to the dGTPase family. Type 3 subfamily.

The protein is Deoxyguanosinetriphosphate triphosphohydrolase-like protein of Synechocystis sp. (strain ATCC 27184 / PCC 6803 / Kazusa).